Consider the following 946-residue polypeptide: Bifunctional glutamine synthetase adenylyltransferase/adenylyl-removing enzyme (946 aa).

The adenylyl removase stretch occupies residues 1 to 440 (MKPLSSPLQQ…VFNELIGDDE (440 aa)). Residues 449–946 (SEQWRELWQD…ASWQKWLVEE (498 aa)) form an adenylyl transferase region.

Belongs to the GlnE family. Requires Mg(2+) as cofactor.

It catalyses the reaction [glutamine synthetase]-O(4)-(5'-adenylyl)-L-tyrosine + phosphate = [glutamine synthetase]-L-tyrosine + ADP. It carries out the reaction [glutamine synthetase]-L-tyrosine + ATP = [glutamine synthetase]-O(4)-(5'-adenylyl)-L-tyrosine + diphosphate. Functionally, involved in the regulation of glutamine synthetase GlnA, a key enzyme in the process to assimilate ammonia. When cellular nitrogen levels are high, the C-terminal adenylyl transferase (AT) inactivates GlnA by covalent transfer of an adenylyl group from ATP to specific tyrosine residue of GlnA, thus reducing its activity. Conversely, when nitrogen levels are low, the N-terminal adenylyl removase (AR) activates GlnA by removing the adenylyl group by phosphorolysis, increasing its activity. The regulatory region of GlnE binds the signal transduction protein PII (GlnB) which indicates the nitrogen status of the cell. The protein is Bifunctional glutamine synthetase adenylyltransferase/adenylyl-removing enzyme of Escherichia coli O45:K1 (strain S88 / ExPEC).